A 501-amino-acid chain; its full sequence is MIWNRKTRYTPYEQWPATKLPQLVAQARQSKWRMQHHIQPTSGLLNDPNGFSYFDGQWHLFYQVFPFGPVHGLKSWQHVTSKNLVDWHDEGLAIRPDTPYDSHGAYTGTALPIDDQLFIMYTGNVRTADWQRESYQLGAWMDTDNHIKKLSRPLIAHAPAGYTSSFRDPDLIRNDHGYYALIGAQTTTEIGAILVYFSKDLTTWTCQGELNVPANARGYMIECPNLVWIDQQPVLLFCPQGLSQATIPYQNIYPNMYLVADQLNLAQAQFTEPHALTQLDDGFDVYATQAINAPDGRALAVSWIGLPEISYPTDRENWAHCLSLVKELTLKDGHLYQNPVAAVDDLRTTAHDLVFEQQRATVAALNGSFELLLTVPADKTVTVNIADQQESGQLQVTVDANHGQVMIDRRHTGNSFAEDYGQTRQVELTAHKTIKIRLIIDVSVFECYIDNGYSVMTGRFFLNATPSRLNVQGDTTAVTGKVWEWRQSEHTGVDNNETKIK.

Substrate contacts are provided by residues Leu-44 to Asp-47, Gln-63, Tyr-106 to Thr-107, Arg-167 to Asp-168, and Glu-222. The active site involves Asp-47.

This sequence belongs to the glycosyl hydrolase 32 family.

The enzyme catalyses Hydrolysis of terminal non-reducing beta-D-fructofuranoside residues in beta-D-fructofuranosides.. Its pathway is glycan biosynthesis; sucrose metabolism. The polypeptide is Sucrose-6-phosphate hydrolase (scrB) (Pediococcus pentosaceus).